A 108-amino-acid polypeptide reads, in one-letter code: Somatoliberin (108 aa).

Positions 1 to 20 are cleaved as a signal peptide; that stretch reads MPLWVFFFVILTLSNSSHCS. The propeptide occupies 21 to 31; sequence PPPPLTLRMRR. Position 75 is a leucine amide (leucine 75). Positions 78-108 are excised as a propeptide; sequence QVDSMWAEQKQMELESILVALLQKHSRNSQG.

Belongs to the glucagon family.

The protein localises to the secreted. Its function is as follows. GRF is released by the hypothalamus and acts on the adenohypophyse to stimulate the secretion of growth hormone. The chain is Somatoliberin (GHRH) from Homo sapiens (Human).